A 448-amino-acid chain; its full sequence is Phosphoglucosamine mutase (448 aa).

Ser-104 (phosphoserine intermediate) is an active-site residue. The Mg(2+) site is built by Ser-104, Asp-245, Asp-247, and Asp-249. At Ser-104 the chain carries Phosphoserine.

It belongs to the phosphohexose mutase family. The cofactor is Mg(2+). Post-translationally, activated by phosphorylation.

It catalyses the reaction alpha-D-glucosamine 1-phosphate = D-glucosamine 6-phosphate. Functionally, catalyzes the conversion of glucosamine-6-phosphate to glucosamine-1-phosphate. The protein is Phosphoglucosamine mutase of Caulobacter vibrioides (strain ATCC 19089 / CIP 103742 / CB 15) (Caulobacter crescentus).